The chain runs to 293 residues: Protease HtpX (293 aa).

2 consecutive transmembrane segments (helical) span residues 4-24 (IGLFLLTNLAVLVVAGVVLSL) and 38-58 (LTNLLIFCAVFGFVGSFISLF). His-145 is a binding site for Zn(2+). The active site involves Glu-146. A Zn(2+)-binding site is contributed by His-149. A run of 2 helical transmembrane segments spans residues 156–176 (ITLSLIQGVVNTFVMFFARII) and 193–213 (IAFFITTIVAELVLGILASMI). Glu-222 contacts Zn(2+).

The protein belongs to the peptidase M48B family. Zn(2+) is required as a cofactor.

The protein resides in the cell inner membrane. This Cellvibrio japonicus (strain Ueda107) (Pseudomonas fluorescens subsp. cellulosa) protein is Protease HtpX.